Here is a 600-residue protein sequence, read N- to C-terminus: Zinc metalloproteinase-disintegrin-like cobrin (600 aa).

Residues 1–8 form the signal peptide; sequence MIQLSWSS. Residues 9 to 179 constitute a propeptide that is removed on maturation; sequence IILESGNVND…DEPIKKTSLL (171 aa). In terms of domain architecture, Peptidase M12B spans 193–388; sequence KYIEFYMVVD…DRPQCILNKP (196 aa). Residues glutamate 196 and aspartate 280 each coordinate Ca(2+). Cystine bridges form between cysteine 304–cysteine 383, cysteine 344–cysteine 367, and cysteine 346–cysteine 351. The Zn(2+) site is built by histidine 329, histidine 333, and histidine 339. Residues cysteine 383, asparagine 386, isoleucine 398, asparagine 401, phenylalanine 403, glutamate 405, glutamate 408, and aspartate 411 each coordinate Ca(2+). The region spanning 396-482 is the Disintegrin domain; that stretch reads PPICGNYFVE…ECPTDVFQRN (87 aa). Disulfide bonds link cysteine 399–cysteine 428, cysteine 410–cysteine 423, cysteine 412–cysteine 418, cysteine 422–cysteine 445, cysteine 436–cysteine 442, cysteine 441–cysteine 467, cysteine 454–cysteine 474, cysteine 461–cysteine 492, cysteine 486–cysteine 497, cysteine 504–cysteine 554, cysteine 519–cysteine 562, cysteine 532–cysteine 542, cysteine 549–cysteine 588, and cysteine 582–cysteine 593. An N-linked (GlcNAc...) asparagine glycan is attached at asparagine 424. The D/ECD-tripeptide signature appears at 460 to 462; the sequence is DCD. Residues aspartate 462, leucine 463, glutamate 465, aspartate 477, and valine 478 each coordinate Ca(2+).

This sequence belongs to the venom metalloproteinase (M12B) family. P-III subfamily. P-IIIa sub-subfamily. In terms of assembly, monomer. Zn(2+) is required as a cofactor. In terms of tissue distribution, expressed by the venom gland.

The protein resides in the secreted. Its function is as follows. Snake venom zinc metalloproteinase that may cleave complement protein C3 into C3c-like (C3o). This chain is Zinc metalloproteinase-disintegrin-like cobrin, found in Naja kaouthia (Monocled cobra).